Here is a 405-residue protein sequence, read N- to C-terminus: Argininosuccinate synthase (405 aa).

Residues 10-18 and Ala37 each bind ATP; that span reads AYSGGLDTS. L-citrulline contacts are provided by Tyr88 and Ser93. Residue Gly118 participates in ATP binding. Positions 120, 124, and 125 each coordinate L-aspartate. Residue Asn124 coordinates L-citrulline. Positions 128, 179, 188, 264, and 276 each coordinate L-citrulline.

It belongs to the argininosuccinate synthase family. Type 1 subfamily. Homotetramer.

Its subcellular location is the cytoplasm. The enzyme catalyses L-citrulline + L-aspartate + ATP = 2-(N(omega)-L-arginino)succinate + AMP + diphosphate + H(+). It functions in the pathway amino-acid biosynthesis; L-arginine biosynthesis; L-arginine from L-ornithine and carbamoyl phosphate: step 2/3. This is Argininosuccinate synthase from Ectopseudomonas mendocina (strain ymp) (Pseudomonas mendocina).